A 249-amino-acid polypeptide reads, in one-letter code: MSRVSDTFAETSSVYSPDHADIYDAIHSARGRDWAAEAGEVVQLVRTRLPEAQSLLDVACGTGAHLERFRAEYAKVAGLELSDAMREIAIRRVPEVPIHIGDIRDFDLGEPFDVITCLCFTAAYMRTVDDLRRVTRNMARHLAPGGVAVIEPWWFPDKFIDGFVTGAVAHHGERVISRLSHSVLEGRTSRMTVRYTVAEPTGIRDFTEFEILSLFTEDEYTAALEDAGIRAEYLPGAPNGRGLFVGIRN.

R30 is a substrate binding site. S-adenosyl-L-methionine contacts are provided by residues A59, E80, and 102-103 (DI). Residues T165, 178–182 (RLSHS), and R241 contribute to the substrate site.

Belongs to the methyltransferase TylM1/DesVI family. In terms of assembly, homodimer. Mg(2+) serves as cofactor.

The catalysed reaction is dTDP-4-amino-2,3,4,6-tetradeoxy-alpha-D-erythro-hexopyranose + 2 S-adenosyl-L-methionine = dTDP-alpha-D-forosamine + 2 S-adenosyl-L-homocysteine + 2 H(+). Involved in the biosynthesis of forosamine ((4-dimethylamino)-2,3,4,6-tetradeoxy-alpha-D-threo-hexopyranose), a highly deoxygenated sugar component of several bioactive natural products such as the insecticidal spinosyns A and D. Catalyzes the dimethylation of the C-4 amino group from dTDP-4-amino-2,3,4,6-tetradeoxy-alpha-D-glucose to yield dTDP-D-forosamine. The protein is dTDP-4-amino-2,3,4,6-tetradeoxy-D-glucose N,N-dimethyltransferase of Saccharopolyspora spinosa.